A 98-amino-acid polypeptide reads, in one-letter code: Hainantoxin-XVII (98 aa).

An N-terminal signal peptide occupies residues 1-40; the sequence is MTTVGVSLFRRSPEKITMKIATFLGLSFLLIASYVLICEA. The propeptide occupies 41-64; it reads QHPGFQELLILEENMRDPENSKER. Disulfide bonds link cysteine 66–cysteine 81, cysteine 73–cysteine 85, and cysteine 80–cysteine 95.

This sequence belongs to the hainantoxin family. 17 subfamily. Expressed by the venom gland.

It localises to the secreted. Its function is as follows. Putative ion channel inhibitor. This is Hainantoxin-XVII from Cyriopagopus hainanus (Chinese bird spider).